The following is a 144-amino-acid chain: Peptide methionine sulfoxide reductase MsrB (144 aa).

The MsrB domain occupies 5 to 128; it reads KEELRQRIGE…NSAALQFIPV (124 aa). Cys117 functions as the Nucleophile in the catalytic mechanism.

This sequence belongs to the MsrB Met sulfoxide reductase family.

The enzyme catalyses L-methionyl-[protein] + [thioredoxin]-disulfide + H2O = L-methionyl-(R)-S-oxide-[protein] + [thioredoxin]-dithiol. The chain is Peptide methionine sulfoxide reductase MsrB from Ligilactobacillus salivarius (strain UCC118) (Lactobacillus salivarius).